Consider the following 310-residue polypeptide: ADP-L-glycero-D-manno-heptose-6-epimerase (310 aa).

Residues 10–11, 31–32, lysine 38, lysine 53, 75–79, and asparagine 92 each bind NADP(+); these read FI, DN, and EGACS. The active-site Proton acceptor is the tyrosine 140. Lysine 144 contacts NADP(+). A substrate-binding site is contributed by asparagine 169. 2 residues coordinate NADP(+): valine 170 and lysine 178. The active-site Proton acceptor is the lysine 178. Residues glycine 180, histidine 187, 201-204, arginine 209, and tyrosine 272 contribute to the substrate site; that span reads FAGS.

Belongs to the NAD(P)-dependent epimerase/dehydratase family. HldD subfamily. Homopentamer. Requires NADP(+) as cofactor.

It carries out the reaction ADP-D-glycero-beta-D-manno-heptose = ADP-L-glycero-beta-D-manno-heptose. Its pathway is nucleotide-sugar biosynthesis; ADP-L-glycero-beta-D-manno-heptose biosynthesis; ADP-L-glycero-beta-D-manno-heptose from D-glycero-beta-D-manno-heptose 7-phosphate: step 4/4. Functionally, catalyzes the interconversion between ADP-D-glycero-beta-D-manno-heptose and ADP-L-glycero-beta-D-manno-heptose via an epimerization at carbon 6 of the heptose. The sequence is that of ADP-L-glycero-D-manno-heptose-6-epimerase from Sodalis glossinidius (strain morsitans).